A 544-amino-acid chain; its full sequence is MFS-type transporter prx5 (544 aa).

Residues 1 to 28 (MAVDTEKDSVQAGSPMETPGSPVDETTE) are disordered. The next 13 helical transmembrane spans lie at 36–56 (WIVS…IPVV), 90–110 (LDHL…VASA), 116–136 (VIAG…AAFA), 148–168 (IGVV…PVTA), 178–198 (AWNF…LLFL), 221–241 (GAFL…WAGV), 249–269 (VVAP…WESF), 290–310 (FTAP…SSIL), 330–350 (VILS…LTCF), 361–381 (LTGS…VTPT), 387–407 (IAFI…SIAI), 418–438 (GVSG…ATSI), and 505–525 (AIFV…AACL).

Belongs to the major facilitator superfamily.

It is found in the cell membrane. MFS-type transporter; part of the gene cluster that mediates the biosynthesis of PR-toxin, a bicyclic sesquiterpene belonging to the eremophilane class and acting as a mycotoxin. The protein is MFS-type transporter prx5 of Penicillium rubens (strain ATCC 28089 / DSM 1075 / NRRL 1951 / Wisconsin 54-1255) (Penicillium chrysogenum).